Consider the following 257-residue polypeptide: 5'-nucleotidase SurE (257 aa).

A divalent metal cation contacts are provided by D8, D9, S39, and N87. The tract at residues 234–257 (VSPLTAPHPTTGHEGLAGLAEKYQ) is disordered.

This sequence belongs to the SurE nucleotidase family. It depends on a divalent metal cation as a cofactor.

The protein localises to the cytoplasm. It carries out the reaction a ribonucleoside 5'-phosphate + H2O = a ribonucleoside + phosphate. Functionally, nucleotidase that shows phosphatase activity on nucleoside 5'-monophosphates. This is 5'-nucleotidase SurE from Natronomonas pharaonis (strain ATCC 35678 / DSM 2160 / CIP 103997 / JCM 8858 / NBRC 14720 / NCIMB 2260 / Gabara) (Halobacterium pharaonis).